Reading from the N-terminus, the 315-residue chain is Replication factor C small subunit (315 aa).

ATP is bound at residue 43–50; the sequence is GSPGVGKT.

Belongs to the activator 1 small subunits family. RfcS subfamily. As to quaternary structure, heteromultimer composed of small subunits (RfcS) and large subunits (RfcL).

Part of the RFC clamp loader complex which loads the PCNA sliding clamp onto DNA. In Methanococcus vannielii (strain ATCC 35089 / DSM 1224 / JCM 13029 / OCM 148 / SB), this protein is Replication factor C small subunit.